The chain runs to 102 residues: Large ribosomal subunit protein bL21 (102 aa).

Belongs to the bacterial ribosomal protein bL21 family. Part of the 50S ribosomal subunit. Contacts protein L20.

Its function is as follows. This protein binds to 23S rRNA in the presence of protein L20. This chain is Large ribosomal subunit protein bL21, found in Latilactobacillus sakei subsp. sakei (strain 23K) (Lactobacillus sakei subsp. sakei).